Reading from the N-terminus, the 233-residue chain is Antiholin-like protein LrgB (233 aa).

The next 7 helical transmembrane spans lie at threonine 9–glutamate 29, phenylalanine 34–threonine 54, isoleucine 63–leucine 83, isoleucine 97–lysine 117, phenylalanine 121–proline 141, alanine 144–isoleucine 164, and isoleucine 212–phenylalanine 232.

This sequence belongs to the CidB/LrgB family. LrgB subfamily.

It localises to the cell membrane. Functionally, inhibits the expression or activity of extracellular murein hydrolases by interacting, possibly with LrgA, with the holin-like proteins CidA and/or CidB. The LrgAB and CidAB proteins may affect the proton motive force of the membrane. May be involved in programmed cell death (PCD), possibly triggering PCD in response to antibiotics and environmental stresses. The chain is Antiholin-like protein LrgB from Staphylococcus aureus (strain Mu3 / ATCC 700698).